We begin with the raw amino-acid sequence, 327 residues long: uncharacterized protein (327 aa).

A signal peptide spans 1 to 24 (MAMACLCLANISWATVCANSTGVA).

This sequence belongs to the fimbrial protein family.

The protein resides in the fimbrium. Part of the sfmACDHF fimbrial operon. Could contribute to adhesion to various surfaces in specific environmental niches. Increases adhesion to eukaryotic T24 bladder epithelial cells in the absence of fim genes. This is an uncharacterized protein from Escherichia coli (strain K12).